We begin with the raw amino-acid sequence, 433 residues long: Protoheme IX farnesyltransferase 2 (433 aa).

A unknown region spans residues 1-164 (MQRFTGLVTA…LTKPRLMWLL (164 aa)). 13 helical membrane-spanning segments follow: residues 4 to 24 (FTGLVTATTLATYLLVVLGVA), 35 to 55 (AVAHYVTAGAVWLLLVAAAAL), 67 to 87 (WGVTAAAVAYPAQAAVGMAVL), 95 to 115 (LHLFGGVGVFALLLITLTWHL), 160 to 180 (LMWLLCLLALSGMALATVTGA), 184 to 204 (GVTIAATLFGGVLAVGAAGTF), 236 to 256 (AFGVGLLVVSMAVLVWLVNPL), 257 to 277 (AAALTAVAVVYYAVVYTVVLK), 282 to 304 (WNTVIGGGAGALPAVIGWAAVAG), 308 to 330 (LPALLLAAVVFCWTPAHFYNLAI), 357 to 377 (ILYWLGATLLVAGALGAVAGF), 378 to 398 (GPVYALTSAVVGFGFLWTVVV), and 413 to 433 (HASNAYLGALLVAILVETMVI). Residues 165–430 (CLLALSGMAL…ALLVAILVET (266 aa)) are protoheme IX prenyltransferase.

In the C-terminal section; belongs to the UbiA prenyltransferase family. Protoheme IX farnesyltransferase subfamily.

Its subcellular location is the cell membrane. It catalyses the reaction heme b + (2E,6E)-farnesyl diphosphate + H2O = Fe(II)-heme o + diphosphate. It participates in porphyrin-containing compound metabolism; heme O biosynthesis; heme O from protoheme: step 1/1. Its function is as follows. Converts heme B (protoheme IX) to heme O by substitution of the vinyl group on carbon 2 of heme B porphyrin ring with a hydroxyethyl farnesyl side group. In Natronomonas pharaonis (strain ATCC 35678 / DSM 2160 / CIP 103997 / JCM 8858 / NBRC 14720 / NCIMB 2260 / Gabara) (Halobacterium pharaonis), this protein is Protoheme IX farnesyltransferase 2 (ctaB2).